The following is a 78-amino-acid chain: Acyl carrier protein (78 aa).

The region spanning 2 to 77 (STIEERVKKI…AAIDYINGHQ (76 aa)) is the Carrier domain. Residue serine 37 is modified to O-(pantetheine 4'-phosphoryl)serine.

The protein belongs to the acyl carrier protein (ACP) family. Post-translationally, 4'-phosphopantetheine is transferred from CoA to a specific serine of apo-ACP by AcpS. This modification is essential for activity because fatty acids are bound in thioester linkage to the sulfhydryl of the prosthetic group.

It localises to the cytoplasm. It functions in the pathway lipid metabolism; fatty acid biosynthesis. Its function is as follows. Carrier of the growing fatty acid chain in fatty acid biosynthesis. The chain is Acyl carrier protein from Erwinia tasmaniensis (strain DSM 17950 / CFBP 7177 / CIP 109463 / NCPPB 4357 / Et1/99).